Reading from the N-terminus, the 156-residue chain is Small ribosomal subunit protein uS7 (156 aa).

This sequence belongs to the universal ribosomal protein uS7 family. As to quaternary structure, part of the 30S ribosomal subunit. Contacts proteins S9 and S11.

One of the primary rRNA binding proteins, it binds directly to 16S rRNA where it nucleates assembly of the head domain of the 30S subunit. Is located at the subunit interface close to the decoding center, probably blocks exit of the E-site tRNA. In Geobacillus thermodenitrificans (strain NG80-2), this protein is Small ribosomal subunit protein uS7.